A 1840-amino-acid chain; its full sequence is Collagen alpha-1(V) chain (1840 aa).

The first 30 residues, 1-30 (MDVHTRWKAPRPGAPLLSSPLLLLLLLLWA), serve as a signal peptide directing secretion. Positions 72-244 (DVAYRVSKDA…DYCEHYSPDC (173 aa)) constitute a Laminin G-like domain. A nonhelical region region spans residues 231 to 445 (RAAYDYCEHY…MPANQDTIYE (215 aa)). Sulfotyrosine is present on residues tyrosine 234, tyrosine 236, tyrosine 240, tyrosine 262, tyrosine 263, tyrosine 336, tyrosine 338, and tyrosine 344. Disordered stretches follow at residues 241–547 (SPDC…QESQ) and 561–1576 (GPAG…EVIQ). A compositionally biased stretch (acidic residues) spans 258–268 (NPDEYYPEGEG). Low complexity-rich tracts occupy residues 335–352 (DYDY…PYED), 375–387 (PTST…SSNP), and 462–471 (IIEPGMLIEG). The interrupted collagenous region stretch occupies residues 446 to 560 (GIGGPRGEKG…ILQQARLALR (115 aa)). Residues 472–487 (PPGPEGPAGLPGPPGT) show a composition bias toward pro residues. 2 stretches are compositionally biased toward low complexity: residues 508-525 (LPGA…LMLP) and 561-572 (GPAGPMGLTGRP). Residues 561-1572 (GPAGPMGLTG…GLPGPPGPPG (1012 aa)) form a triple-helical region region. 4-hydroxyproline is present on residues proline 572, proline 578, and proline 623. Lysine 629 bears the 5-hydroxylysine mark. Proline 641 carries the post-translational modification 4-hydroxyproline. Lysine 644 bears the 5-hydroxylysine mark. A 4-hydroxyproline mark is found at proline 650, proline 656, proline 659, proline 677, and proline 680. Residues 673 to 688 (PRGLPGEPGPRGLLGP) are compositionally biased toward low complexity. 3-hydroxyproline is present on residues proline 682 and proline 688. Residues 689-698 (KGPPGPPGPP) show a composition bias toward pro residues. 4-hydroxyproline occurs at positions 692, 698, and 707. Residue lysine 710 is modified to 5-hydroxylysine. 4-hydroxyproline occurs at positions 719, 722, 728, and 734. Residues 724–743 (QQGNPGAQGLPGPQGAIGPP) are compositionally biased toward low complexity. A 5-hydroxylysine modification is found at lysine 746. A compositionally biased stretch (low complexity) spans 749 to 758 (LGKPGLPGMP). A 4-hydroxyproline mark is found at proline 752, proline 758, proline 764, proline 767, and proline 773. The residue at position 776 (lysine 776) is a 5-hydroxylysine. 4-hydroxyproline is present on residues proline 782 and proline 791. A 5-hydroxylysine mark is found at lysine 797, lysine 806, lysine 809, and lysine 812. Residue proline 818 is modified to 4-hydroxyproline. 5-hydroxylysine is present on lysine 821. Residue proline 836 is modified to 4-hydroxyproline. Basic and acidic residues predominate over residues 839 to 848 (RGEDGPEGPK). 5-hydroxylysine is present on residues lysine 848 and lysine 866. A 4-hydroxyproline mark is found at proline 872, proline 875, and proline 878. A 5-hydroxylysine modification is found at lysine 884. Residues proline 890 and proline 893 each carry the 4-hydroxyproline modification. Lysine 899 carries the post-translational modification 5-hydroxylysine. 4-hydroxyproline is present on residues proline 905 and proline 908. Over residues 910–919 (PRGQRGPTGP) the composition is skewed to low complexity. Proline 932 and proline 947 each carry 4-hydroxyproline. Composition is skewed to low complexity over residues 973-992 (KDGL…QGKT) and 1001-1013 (VGPQ…TGPM). 4-hydroxyproline is present on residues proline 1019, proline 1022, proline 1025, and proline 1031. The span at 1090-1106 (SPGERGPAGAAGPIGIP) shows a compositional bias: low complexity. The span at 1108–1117 (RPGPQGPPGP) shows a compositional bias: pro residues. Residues proline 1223 and proline 1226 each carry the 4-hydroxyproline modification. The segment covering 1261 to 1270 (PSGAPGADGP) has biased composition (low complexity). The segment covering 1296-1305 (GLPGEGGPLG) has biased composition (gly residues). 2 stretches are compositionally biased toward pro residues: residues 1382–1400 (TGEP…PGPA) and 1456–1471 (SPGP…PPGL). A 4-hydroxyproline mark is found at proline 1469 and proline 1472. Over residues 1487–1496 (PGLIGLIGPP) the composition is skewed to low complexity. The segment covering 1528-1543 (PLGPPGPPGLPGPPGP) has biased composition (pro residues). The span at 1544 to 1556 (KGAKGSSGPTGPK) shows a compositional bias: low complexity. The segment at 1573 to 1607 (EVIQPLPIQASRTRRNIDASQLLDDGAGESYVDYA) is nonhelical region. A sulfotyrosine mark is found at tyrosine 1603 and tyrosine 1606. Positions 1611–1839 (EEIFGSLNSL…GFEVGPACFL (229 aa)) constitute a Fibrillar collagen NC1 domain.

This sequence belongs to the fibrillar collagen family. As to quaternary structure, trimers of two alpha 1(V) and one alpha 2(V) chains in most tissues and trimers of one alpha 1(V), one alpha 2(V), and one alpha 3(V) chains in placenta. Interacts with CSPG4. In terms of processing, prolines at the third position of the tripeptide repeating unit (G-X-Y) are hydroxylated in some or all of the chains. Sulfated on 40% of tyrosines. Post-translationally, hydroxylation on proline residues within the sequence motif, GXPG, is most likely to be 4-hydroxy as this fits the requirement for 4-hydroxylation in vertebrates. In terms of tissue distribution, a high molecular weight form was detected in Schwann cells and peripheral nerve. A lower, probably processed form, is detected in all other tissues tested (at protein level).

It is found in the secreted. The protein resides in the extracellular space. Its subcellular location is the extracellular matrix. Functionally, type V collagen is a member of group I collagen (fibrillar forming collagen). It is a minor connective tissue component of nearly ubiquitous distribution. Type V collagen binds to DNA, heparan sulfate, thrombospondin, heparin, and insulin. This chain is Collagen alpha-1(V) chain (Col5a1), found in Rattus norvegicus (Rat).